The sequence spans 492 residues: Bifunctional purine biosynthesis protein PurH (492 aa).

One can recognise an MGS-like domain in the interval 1-144 (MKKVILSVSD…KNFKHVTTIV (144 aa)).

Belongs to the PurH family.

The catalysed reaction is (6R)-10-formyltetrahydrofolate + 5-amino-1-(5-phospho-beta-D-ribosyl)imidazole-4-carboxamide = 5-formamido-1-(5-phospho-D-ribosyl)imidazole-4-carboxamide + (6S)-5,6,7,8-tetrahydrofolate. The enzyme catalyses IMP + H2O = 5-formamido-1-(5-phospho-D-ribosyl)imidazole-4-carboxamide. It participates in purine metabolism; IMP biosynthesis via de novo pathway; 5-formamido-1-(5-phospho-D-ribosyl)imidazole-4-carboxamide from 5-amino-1-(5-phospho-D-ribosyl)imidazole-4-carboxamide (10-formyl THF route): step 1/1. Its pathway is purine metabolism; IMP biosynthesis via de novo pathway; IMP from 5-formamido-1-(5-phospho-D-ribosyl)imidazole-4-carboxamide: step 1/1. The polypeptide is Bifunctional purine biosynthesis protein PurH (Staphylococcus carnosus (strain TM300)).